The sequence spans 355 residues: Syntaxin-5 (355 aa).

The Cytoplasmic portion of the chain corresponds to 1–333; that stretch reads MIPRKRYGSK…KYFQSVTSNR (333 aa). Residues 28–37 are compositionally biased toward polar residues; it reads PATAGSSSSD. The interval 28–47 is disordered; that stretch reads PATAGSSSSDIAPLPPPVAL. An IxM motif; signal for cargo packaging into COPII-coated vesicles motif is present at residues 245–247; it reads IDM. One can recognise a t-SNARE coiled-coil homology domain in the interval 263-325; the sequence is DSYIQSRADT…EAAHSEILKY (63 aa). The stretch at 287-318 forms a coiled coil; it reads FQQLAHMVKEQEETIQRIDENVLGAQLDVEAA. Residues 334–354 traverse the membrane as a helical; Anchor for type IV membrane protein segment; that stretch reads WLMVKIFLILIVFFIIFVVFL. A topological domain (vesicular) is located at residue Ala-355.

The protein belongs to the syntaxin family. Part of a ternary complex containing STX5A, NSFL1C and VCP. Part of a unique SNARE complex composed of the Golgi SNAREs GOSR1, GOSR2 and YKT6. This complex also includes VTI1A. Component of a SNARE complex consisting of STX5, YKT6, GOSR1 and BET1L. Interacts with BET1L. Interacts with BET1. Interacts with COG4. Interacts with GM130/GOLGA2. Interacts (via IxM motif) with SEC24C and SEC24D; mediates STX5 packaging into COPII-coated vesicles. Interacts with VLDLR; this interaction mediates VLDLR translocation from the endoplasmic reticulum to the plasma membrane.

The protein localises to the endoplasmic reticulum-Golgi intermediate compartment membrane. It is found in the golgi apparatus membrane. Its function is as follows. Mediates endoplasmic reticulum to Golgi transport. Together with p115/USO1 and GM130/GOLGA2, involved in vesicle tethering and fusion at the cis-Golgi membrane to maintain the stacked and inter-connected structure of the Golgi apparatus. The polypeptide is Syntaxin-5 (STX5) (Bos taurus (Bovine)).